Here is a 159-residue protein sequence, read N- to C-terminus: MGEQKISSLVTGGGASAGPPLGPALGPLGVNIMEVINAINDKTKDFEGMKVPVTVIVDSDTKKYEIEIGIPSAAALIMKEAGIQKGSGASGTEWAGDVTMDAVVKVANTKLENSYASSLKSVAKTIVGTCLALGVKVEGKTPKEITAEINEGKWDEKFQ.

The protein belongs to the universal ribosomal protein uL11 family. As to quaternary structure, part of the ribosomal stalk of the 50S ribosomal subunit. Interacts with L10 and the large rRNA to form the base of the stalk. L10 forms an elongated spine to which L12 dimers bind in a sequential fashion forming a multimeric L10(L12)X complex.

In terms of biological role, forms part of the ribosomal stalk which helps the ribosome interact with GTP-bound translation factors. The protein is Large ribosomal subunit protein uL11 of Nitrosopumilus maritimus (strain SCM1).